The primary structure comprises 178 residues: Fatty-acid and retinol-binding protein 1 (178 aa).

The N-terminal stretch at methionine 1–alanine 16 is a signal peptide. 2 coiled-coil regions span residues aspartate 67–asparagine 89 and glutamine 122–threonine 154.

This sequence belongs to the fatty-acid and retinol-binding protein (FARBP) family. In terms of processing, not glycosylated.

It localises to the secreted. Binds retinol and different fatty acids. The polypeptide is Fatty-acid and retinol-binding protein 1 (Litomosoides sigmodontis (Filarial nematode worm)).